The chain runs to 94 residues: MASLKKSLFLVLFLGLVSLSICEEEKRENEEDAEDENHEEESEEKRGLLDFAKHVIGIASKLGKRSEEKRFWPFMGKRSEEKRFWPFMGKRSEE.

Positions 1–22 are cleaved as a signal peptide; the sequence is MASLKKSLFLVLFLGLVSLSIC. Positions 23–46 are excised as a propeptide; that stretch reads EEEKRENEEDAEDENHEEESEEKR. The disordered stretch occupies residues 27–46; it reads RENEEDAEDENHEEESEEKR. A compositionally biased stretch (acidic residues) spans 30-42; that stretch reads EEDAEDENHEEES. L62 carries the leucine amide modification. Residues 66–70 constitute a propeptide that is removed on maturation; the sequence is SEEKR. The residue at position 75 (M75) is a Methionine amide. The propeptide occupies 79–83; that stretch reads SEEKR. M88 is subject to Methionine amide. Residues 92–94 constitute a propeptide that is removed on maturation; that stretch reads SEE.

The protein belongs to the frog skin active peptide (FSAP) family. Brevinin subfamily. In terms of tissue distribution, expressed by the skin glands.

The protein localises to the secreted. Its function is as follows. Fallaxidin-1.3 shows no antibacterial activity against Gram-positive or Gram-negative bacteria. Does not inhibit the formation of NO by neuronal nitric oxide synthase. Has no effect on splenocyte proliferation or smooth muscle contraction. In terms of biological role, fallaxidin-3.2 shows antibacterial activity against the Gram-positive bacteria E.faecalis (MIC=100 uM) and L.lactis (MIC=500 uM). No antibacterial activity against the Gram-positive bacteria B.cereus, L.innocua, M.luteus, S.epidermidis, S.uberis and S.aureus, or the Gram-negative bacteria E.cloacae and E.coli. The polypeptide is Preprofallaxidin-9 (Litoria fallax (Eastern dwarf tree frog)).